The chain runs to 152 residues: Ribosome maturation factor RimP (152 aa).

Belongs to the RimP family.

The protein resides in the cytoplasm. In terms of biological role, required for maturation of 30S ribosomal subunits. The chain is Ribosome maturation factor RimP from Alkalilimnicola ehrlichii (strain ATCC BAA-1101 / DSM 17681 / MLHE-1).